Consider the following 263-residue polypeptide: Glutamate/glutamine/aspartate/asparagine transport ATP-binding protein BztD (263 aa).

One can recognise an ABC transporter domain in the interval 23-257; sequence IQISQMNKWY…PQSERTKQFL (235 aa). 55–62 lines the ATP pocket; sequence GPSGSGKS.

This sequence belongs to the ABC transporter superfamily. In terms of assembly, bztB and BztC form a heterodimer which can form a membrane complex with a homodimer of BztD.

The protein localises to the cell membrane. Part of a binding-protein-dependent transport system for glutamate, glutamine, aspartate, asparagine. Probably responsible for energy coupling to the transport system. The polypeptide is Glutamate/glutamine/aspartate/asparagine transport ATP-binding protein BztD (bztD) (Rhodobacter capsulatus (strain ATCC BAA-309 / NBRC 16581 / SB1003)).